A 263-amino-acid polypeptide reads, in one-letter code: Endonuclease 8 (263 aa).

Proline 2 serves as the catalytic Schiff-base intermediate with DNA. Catalysis depends on glutamate 3, which acts as the Proton donor. Lysine 53 acts as the Proton donor; for beta-elimination activity in catalysis. Residues glutamine 70, arginine 125, and asparagine 169 each contribute to the DNA site. The segment at 229 to 263 adopts an FPG-type zinc-finger fold; it reads KVFHRDGEACERCGGIIEKTTLSSRPFYWCPHCQK. Arginine 253 (proton donor; for delta-elimination activity) is an active-site residue.

Belongs to the FPG family. Zn(2+) is required as a cofactor.

The enzyme catalyses 2'-deoxyribonucleotide-(2'-deoxyribose 5'-phosphate)-2'-deoxyribonucleotide-DNA = a 3'-end 2'-deoxyribonucleotide-(2,3-dehydro-2,3-deoxyribose 5'-phosphate)-DNA + a 5'-end 5'-phospho-2'-deoxyribonucleoside-DNA + H(+). Functionally, involved in base excision repair of DNA damaged by oxidation or by mutagenic agents. Acts as a DNA glycosylase that recognizes and removes damaged bases. Has a preference for oxidized pyrimidines, such as thymine glycol, 5,6-dihydrouracil and 5,6-dihydrothymine. Has AP (apurinic/apyrimidinic) lyase activity and introduces nicks in the DNA strand. Cleaves the DNA backbone by beta-delta elimination to generate a single-strand break at the site of the removed base with both 3'- and 5'-phosphates. The sequence is that of Endonuclease 8 from Salmonella heidelberg (strain SL476).